A 360-amino-acid chain; its full sequence is uncharacterized protein (360 aa).

The region spanning 4-235 (LSLQHIQKIY…PANMFVSGFI (232 aa)) is the ABC transporter domain. 37 to 44 (GPSGCGKS) serves as a coordination point for ATP.

The protein belongs to the ABC transporter superfamily.

This is an uncharacterized protein from Escherichia coli (strain K12).